The sequence spans 198 residues: Recombination protein RecR (198 aa).

The C4-type zinc-finger motif lies at 56–71 (CHVCGNVDTGDPCGIC). Positions 79-174 (RMLCVVEEVA…RLTQLAHGLP (96 aa)) constitute a Toprim domain.

It belongs to the RecR family.

May play a role in DNA repair. It seems to be involved in an RecBC-independent recombinational process of DNA repair. It may act with RecF and RecO. The polypeptide is Recombination protein RecR (Rhizorhabdus wittichii (strain DSM 6014 / CCUG 31198 / JCM 15750 / NBRC 105917 / EY 4224 / RW1) (Sphingomonas wittichii)).